Here is a 145-residue protein sequence, read N- to C-terminus: DnaJ homolog subfamily B member 3 (145 aa).

The region spanning 1 to 69 (MVDYYEVLDV…KKRDIYDRYG (69 aa)) is the J domain.

In terms of tissue distribution, expressed in sperm (at protein level).

Its function is as follows. May operate as a co-chaperone of the male germ cell- and haploid stage-specific Hsp70 proteins. This is DnaJ homolog subfamily B member 3 (DNAJB3) from Homo sapiens (Human).